A 174-amino-acid polypeptide reads, in one-letter code: Photosystem I assembly protein Ycf4 (174 aa).

2 helical membrane-spanning segments follow: residues 11–31 (LSNI…FLNG) and 56–76 (IILM…CLTI).

It belongs to the Ycf4 family.

It is found in the plastid. The protein resides in the chloroplast thylakoid membrane. Seems to be required for the assembly of the photosystem I complex. The sequence is that of Photosystem I assembly protein Ycf4 from Emiliania huxleyi (Coccolithophore).